We begin with the raw amino-acid sequence, 255 residues long: Syntaxin-23 (255 aa).

The disordered stretch occupies residues 1–31; that stretch reads MSFQDLEAGRGRSLASSRNINGGGSRQDTTQ. At serine 2 the chain carries N-acetylserine. The segment covering 14–31 has biased composition (polar residues); it reads LASSRNINGGGSRQDTTQ. The t-SNARE coiled-coil homology domain maps to 184–246; it reads EAVIEEREQG…AQGKSHLVRH (63 aa).

It belongs to the syntaxin family. In terms of assembly, part of the t-SNARE complex. Interacts with RGS1. Expressed at higher levels in leaves, flowers and stems than in roots.

The protein localises to the membrane. Functionally, may function in the docking or fusion of transport vesicles with the prevacuolar membrane. In Arabidopsis thaliana (Mouse-ear cress), this protein is Syntaxin-23 (SYP23).